We begin with the raw amino-acid sequence, 828 residues long: DNA topoisomerase 3 (828 aa).

In terms of domain architecture, Toprim spans 4–149; the sequence is RILNVAEKPS…KFEFYRAHFS (146 aa). Residues 167-617 form the Topo IA-type catalytic domain; sequence NEKDSIAVDT…STIEKYKQLY (451 aa). Tyrosine 361 acts as the O-(5'-phospho-DNA)-tyrosine intermediate in catalysis. The segment at 763–828 is disordered; the sequence is QQQQQQQQQQ…SDRNNNNFIF (66 aa).

It belongs to the type IA topoisomerase family.

The enzyme catalyses ATP-independent breakage of single-stranded DNA, followed by passage and rejoining.. Functionally, releases the supercoiling and torsional tension of DNA introduced during the DNA replication and transcription by transiently cleaving and rejoining one strand of the DNA duplex. Introduces a single-strand break via transesterification at a target site in duplex DNA. The scissile phosphodiester is attacked by the catalytic tyrosine of the enzyme, resulting in the formation of a DNA-(5'-phosphotyrosyl)-enzyme intermediate and the expulsion of a 3'-OH DNA strand. The free DNA strand than undergoes passage around the unbroken strand thus removing DNA supercoils. Finally, in the religation step, the DNA 3'-OH attacks the covalent intermediate to expel the active-site tyrosine and restore the DNA phosphodiester backbone. The protein is DNA topoisomerase 3 (top3) of Dictyostelium discoideum (Social amoeba).